Consider the following 78-residue polypeptide: Large ribosomal subunit protein bL28 (78 aa).

The disordered stretch occupies residues 1-20 (MSRVCQVTGKGPVTGNNISH).

Belongs to the bacterial ribosomal protein bL28 family.

This Pseudomonas putida (strain ATCC 700007 / DSM 6899 / JCM 31910 / BCRC 17059 / LMG 24140 / F1) protein is Large ribosomal subunit protein bL28.